We begin with the raw amino-acid sequence, 1567 residues long: ABC multidrug transporter MDR1 (1567 aa).

Over residues 1-11 (MASQPPQPPSG) the composition is skewed to pro residues. The segment at 1–37 (MASQPPQPPSGQPDTQYEEYQSEVITETTNRPTPAAD) is disordered. Residues 22–32 (SEVITETTNRP) are compositionally biased toward polar residues. N-linked (GlcNAc...) asparagine glycosylation is found at N149, N157, and N356. The region spanning 167-432 (VQYQDTFLSP…FEEMGWYCPP (266 aa)) is the ABC transporter 1 domain. 6 helical membrane-spanning segments follow: residues 543–563 (STIA…SLFF), 571–591 (GFFA…LMSI), 636–656 (IPIK…LGGL), 661–681 (AKFF…SAIF), 691–711 (IPQA…YTGF), and 798–818 (LGIL…VSEL). Residues N819, N895, and N912 are each glycosylated (N-linked (GlcNAc...) asparagine). The 244-residue stretch at 891–1134 (FTWRNVTYDI…LLNYFETHGA (244 aa)) folds into the ABC transporter 2 domain. 927 to 934 (GVSGAGKT) serves as a coordination point for ATP. The interval 1172 to 1202 (ESRHVQQELDRIQSETSKRNEGHGQSAEKEP) is disordered. The chain crosses the membrane as a helical span at residues 1231 to 1251 (IWGKLLLGLTSALFIGFSFFL). N1253 carries N-linked (GlcNAc...) asparagine glycosylation. Helical transmembrane passes span 1257 to 1277 (AGLQ…SSLV), 1305 to 1325 (VFLL…GIIA), 1345 to 1365 (ILLL…QMII), 1372 to 1392 (ETAG…NGVL), and 1498 to 1518 (GIGW…YYLI).

Belongs to the ABC transporter superfamily. ABCG family. PDR (TC 3.A.1.205) subfamily.

The protein localises to the cell membrane. It carries out the reaction voriconazole(in) + ATP + H2O = voriconazole(out) + ADP + phosphate + H(+). It catalyses the reaction fluconazole(in) + ATP + H2O = fluconazole(out) + ADP + phosphate + H(+). The catalysed reaction is (R)-miconazole(in) + ATP + H2O = (R)-miconazole(out) + ADP + phosphate + H(+). The enzyme catalyses (S)-miconazole(in) + ATP + H2O = (S)-miconazole(out) + ADP + phosphate + H(+). Its function is as follows. Pleiotropic ABC efflux transporter that may be involved in the modulation susceptibility to a wide range of unrelated cytotoxic compounds. The polypeptide is ABC multidrug transporter MDR1 (Trichophyton equinum (strain ATCC MYA-4606 / CBS 127.97) (Horse ringworm fungus)).